The primary structure comprises 554 residues: Estrogen receptor beta (554 aa).

The modulating stretch occupies residues 25-173 (TEIKNSPAGV…NPGSKKDAHF (149 aa)). 2 NR C4-type zinc fingers span residues 174–194 (CAVC…CEGC) and 210–234 (CPAT…LRKC). The segment at residues 174-239 (CAVCSDYASG…RLRKCYEVGM (66 aa)) is a DNA-binding region (nuclear receptor). Positions 289–521 (SPEQFVLTLL…DLLLEMLNAH (233 aa)) constitute an NR LBD domain. The disordered stretch occupies residues 529–554 (PLATHPEFGPLEQMEPGESLRKGEPQ).

The protein belongs to the nuclear hormone receptor family. NR3 subfamily. As to quaternary structure, binds DNA as a homodimer. Can form a heterodimer with ER-alpha. In terms of tissue distribution, brain, pituitary, skeletal muscle, liver, adrenal, kidney, intestine and ovary.

The protein resides in the nucleus. Its function is as follows. Binds estrogens with an affinity similar to that of ER-alpha, and activates expression of reporter genes containing estrogen response elements (ERE) in an estrogen-dependent manner. Locally synthesized estrogens may act via ER beta, in addition to ER alpha, to mediate seasonal or developmental effects on nearby song nuclei. The sequence is that of Estrogen receptor beta (ESR2) from Sturnus vulgaris (Starling).